Here is a 485-residue protein sequence, read N- to C-terminus: MDATRKPLRIPPAMALYAEEQGVFDIIQKMVKKVLVDRPKDPIQYMIDHLSNDNDDVPRVFILGPPASGKHTMAKLLCKRLNATHLTPESVLSSDVSLLAKEAQSYRDKGQEVPDELWAKLMQQRLSKVDCIKRGWILEGFPKTREQALKLQMAGICPDHLVVLDAPDIVLIERNMGKRIDTANGEVYHTTFDWPSDPTVQRNLVEPEGISEEETGLRLIEYHRNIPGILRTYPKTSKKINADQPYMDVFSQVLTFVLSKPRSLAPHTPRILLYGPPGSGRSLQASLLAQKYGIVNICCGQVLKEAVADQTKLGEVIQPYIENDQQVPDNLVLKILTEHLSSLESATHGWVLHGFPRDTDQAALLKDAGFVPNRVFSLDLSDDVVIERLSLCMTDPVSGERYHDIYKPAPSSEVHERLQQNPRHSEQRVQARLDMYHANAEELDEFYPDVIHINADQDPYTVFEFIESYTVSPLPRPLPEEPTSP.

Adenylate kinase stretches follow at residues 58–258 and 269–472; these read PRVF…TFVL and PRIL…YTVS. 67–72 lines the ATP pocket; sequence ASGKHT. The interval 87–113 is NMP 1; it reads TPESVLSSDVSLLAKEAQSYRDKGQEV. AMP contacts are provided by residues 140-143 and Q147; that span reads GFPK. The tract at residues 177-206 is LID 1; that stretch reads GKRIDTANGEVYHTTFDWPSDPTVQRNLVE. Position 218 (R218) interacts with AMP. 278–283 serves as a coordination point for ATP; the sequence is GSGRSL. Residues 298–327 form an NMP 2 region; that stretch reads CCGQVLKEAVADQTKLGEVIQPYIENDQQV. AMP contacts are provided by residues 325–327, 354–357, and Q361; these read QQV and GFPR. Residues 391–424 form an LID 2 region; it reads LCMTDPVSGERYHDIYKPAPSSEVHERLQQNPRH. R432 lines the AMP pocket.

The protein belongs to the adenylate kinase family.

The protein resides in the cytoplasm. Its subcellular location is the cytosol. The catalysed reaction is AMP + ATP = 2 ADP. It catalyses the reaction a 2'-deoxyribonucleoside 5'-diphosphate + ATP = a 2'-deoxyribonucleoside 5'-triphosphate + ADP. It carries out the reaction a ribonucleoside 5'-diphosphate + ATP = a ribonucleoside 5'-triphosphate + ADP. Functionally, nucleoside monophosphate (NMP) kinase that catalyzes the reversible transfer of the terminal phosphate group between nucleoside triphosphates and monophosphates. Has highest activity toward AMP, and weaker activity toward dAMP, CMP and dCMP. Also displays broad nucleoside diphosphate kinase activity. This chain is Adenylate kinase 8 (ak8), found in Xenopus tropicalis (Western clawed frog).